We begin with the raw amino-acid sequence, 174 residues long: Crossover junction endodeoxyribonuclease RuvC (174 aa).

Residues aspartate 8, glutamate 67, and aspartate 139 contribute to the active site. Mg(2+) is bound by residues aspartate 8, glutamate 67, and aspartate 139.

Belongs to the RuvC family. Homodimer which binds Holliday junction (HJ) DNA. The HJ becomes 2-fold symmetrical on binding to RuvC with unstacked arms; it has a different conformation from HJ DNA in complex with RuvA. In the full resolvosome a probable DNA-RuvA(4)-RuvB(12)-RuvC(2) complex forms which resolves the HJ. Mg(2+) serves as cofactor.

It is found in the cytoplasm. The catalysed reaction is Endonucleolytic cleavage at a junction such as a reciprocal single-stranded crossover between two homologous DNA duplexes (Holliday junction).. The RuvA-RuvB-RuvC complex processes Holliday junction (HJ) DNA during genetic recombination and DNA repair. Endonuclease that resolves HJ intermediates. Cleaves cruciform DNA by making single-stranded nicks across the HJ at symmetrical positions within the homologous arms, yielding a 5'-phosphate and a 3'-hydroxyl group; requires a central core of homology in the junction. The consensus cleavage sequence is 5'-(A/T)TT(C/G)-3'. Cleavage occurs on the 3'-side of the TT dinucleotide at the point of strand exchange. HJ branch migration catalyzed by RuvA-RuvB allows RuvC to scan DNA until it finds its consensus sequence, where it cleaves and resolves the cruciform DNA. In Pseudomonas entomophila (strain L48), this protein is Crossover junction endodeoxyribonuclease RuvC.